Reading from the N-terminus, the 796-residue chain is MIKNRKEDLPIVILKENVLFPNITLWVTFDNEYVINSIAQSMLEERLILFAYSNEPNCDESDRGVVKNLCSVGTYSKLIQVIKISKDVIKVLVECQSRVLIDSVSKKNDYLRAKVTFVPDSSGLNRELFTYSKFLKETYEAYRNSLSLKSYDADNEPINYFENPSKLVDIIASNSNLENSIKLELLQELNVKTRIEKLIVNLSIEIDLLDLKKDINSKVRAKLDKGQRDYFLSEQVKEIQKRLGKDENDYIDRLNSKDIPEDVKSKIEKEISRLSKMQMNSPDANIIRSYIELILDLPWNENTVMKNHLSEIEFILRNSHYGMDEAKEKIINFLAVYQINSKVKAPILCLVGPPGIGKTSLVESIARSLSREFVKISLGGLRDEAEIRGHRRTYVGSLPGVFISAMKRSGKSNPVILLDEIDKINSSYKGNPESALLEVLDPEQNYKFIDHYLEIPYDLSNVLFVTTANSLNGMSKPLLDRMEIIKVEGYSYIEKLEIAKIFLIPSIIKESFLDKVYIRIEDDVIFNLIRNYTMESGVRGLKRVLTNLIRRLVRELLYEYSKDQIIKGNFYSPSSLIHGNNSLFTHDPDIPGIYKIININNYYNYVDTEDNLDLIKIDSSGFVYGLAWTNYGGTVLPVEATKFEKKGDIILTGSLGAIMKESAQLAYSIVKTYSSKLNFDVKESPEIHLHFPEGATPKDGPSAGITIATAIASILSDKKVPLDLAMTGEVTLKGFVLPVGGIKEKVLAAYRNGISKVILPKDNKKDYSKLPEEVKDNIDVKFVSSLEEVFDYLNII.

Positions 9-206 constitute a Lon N-terminal domain; that stretch reads LPIVILKENV…KLIVNLSIEI (198 aa). ATP is bound at residue 352–359; it reads GPPGIGKT. The Lon proteolytic domain maps to 617–796; sequence IDSSGFVYGL…EEVFDYLNII (180 aa). Residues serine 702 and lysine 745 contribute to the active site.

This sequence belongs to the peptidase S16 family. Homohexamer. Organized in a ring with a central cavity.

The protein resides in the cytoplasm. It carries out the reaction Hydrolysis of proteins in presence of ATP.. Functionally, ATP-dependent serine protease that mediates the selective degradation of mutant and abnormal proteins as well as certain short-lived regulatory proteins. Required for cellular homeostasis and for survival from DNA damage and developmental changes induced by stress. Degrades polypeptides processively to yield small peptide fragments that are 5 to 10 amino acids long. Binds to DNA in a double-stranded, site-specific manner. The sequence is that of Lon protease 2 (lon2) from Borreliella burgdorferi (strain ATCC 35210 / DSM 4680 / CIP 102532 / B31) (Borrelia burgdorferi).